The following is a 161-amino-acid chain: Putative 4-hydroxy-4-methyl-2-oxoglutarate aldolase (161 aa).

Residues 77-80 (GGNL) and Arg99 each bind substrate. A divalent metal cation is bound at residue Asp100.

Belongs to the class II aldolase/RraA-like family. As to quaternary structure, homotrimer. It depends on a divalent metal cation as a cofactor.

It catalyses the reaction 4-hydroxy-4-methyl-2-oxoglutarate = 2 pyruvate. The enzyme catalyses oxaloacetate + H(+) = pyruvate + CO2. Functionally, catalyzes the aldol cleavage of 4-hydroxy-4-methyl-2-oxoglutarate (HMG) into 2 molecules of pyruvate. Also contains a secondary oxaloacetate (OAA) decarboxylase activity due to the common pyruvate enolate transition state formed following C-C bond cleavage in the retro-aldol and decarboxylation reactions. The protein is Putative 4-hydroxy-4-methyl-2-oxoglutarate aldolase of Methylococcus capsulatus (strain ATCC 33009 / NCIMB 11132 / Bath).